The sequence spans 747 residues: Catalase-peroxidase 1 (747 aa).

Positions 1–22 (MTDTSDARPPHSDDKTRSHSES) are enriched in basic and acidic residues. The interval 1 to 39 (MTDTSDARPPHSDDKTRSHSESENPAIDSPEPKVHAPLT) is disordered. The tryptophyl-tyrosyl-methioninium (Trp-Tyr) (with M-266) cross-link spans 112–240 (WHAAGTYRIF…FGATTMGLIY (129 aa)). Catalysis depends on His-113, which acts as the Proton acceptor. Positions 240 to 266 (YVNPEGPEGKPDPLAAAHDIRETFGRM) form a cross-link, tryptophyl-tyrosyl-methioninium (Tyr-Met) (with W-112). His-281 is a heme b binding site.

This sequence belongs to the peroxidase family. Peroxidase/catalase subfamily. In terms of assembly, homodimer or homotetramer. It depends on heme b as a cofactor. In terms of processing, formation of the three residue Trp-Tyr-Met cross-link is important for the catalase, but not the peroxidase activity of the enzyme.

The enzyme catalyses H2O2 + AH2 = A + 2 H2O. The catalysed reaction is 2 H2O2 = O2 + 2 H2O. In terms of biological role, bifunctional enzyme with both catalase and broad-spectrum peroxidase activity. This Mycolicibacterium vanbaalenii (strain DSM 7251 / JCM 13017 / BCRC 16820 / KCTC 9966 / NRRL B-24157 / PYR-1) (Mycobacterium vanbaalenii) protein is Catalase-peroxidase 1.